A 608-amino-acid polypeptide reads, in one-letter code: Thiol:disulfide interchange protein DsbD (608 aa).

The N-terminal stretch at Met1 to Ala22 is a signal peptide. A disulfide bridge connects residues Cys135 and Cys141. Over residues Ser161–Glu173 the composition is skewed to polar residues. A disordered region spans residues Ser161–Glu180. 8 helical membrane passes run Leu194–Phe214, Phe241–Ala261, Ile273–Phe293, Gly314–Cys334, Val352–Ile372, Trp387–Leu407, Val414–Ala434, and Ser456–Pro476. Residues Cys212 and Cys334 are joined by a disulfide bond. The Thioredoxin domain maps to Leu469–Lys608. Cysteines 522 and 525 form a disulfide.

It belongs to the thioredoxin family. DsbD subfamily.

Its subcellular location is the cell inner membrane. It carries out the reaction [protein]-dithiol + NAD(+) = [protein]-disulfide + NADH + H(+). The catalysed reaction is [protein]-dithiol + NADP(+) = [protein]-disulfide + NADPH + H(+). Functionally, required to facilitate the formation of correct disulfide bonds in some periplasmic proteins and for the assembly of the periplasmic c-type cytochromes. Acts by transferring electrons from cytoplasmic thioredoxin to the periplasm. This transfer involves a cascade of disulfide bond formation and reduction steps. The sequence is that of Thiol:disulfide interchange protein DsbD from Colwellia psychrerythraea (strain 34H / ATCC BAA-681) (Vibrio psychroerythus).